The primary structure comprises 139 residues: Small ribosomal subunit protein eS12 (139 aa).

The protein belongs to the eukaryotic ribosomal protein eS12 family. Subunit of the 40S ribosomal complex. Part of the small subunit (SSU) processome, composed of more than 70 proteins and the RNA chaperone small nucleolar RNA (snoRNA) U3.

It localises to the nucleus. It is found in the nucleolus. Functionally, subunit of the 40S ribosomal complex. Part of the small subunit (SSU) processome, first precursor of the small eukaryotic ribosomal subunit. During the assembly of the SSU processome in the nucleolus, many ribosome biogenesis factors, an RNA chaperone and ribosomal proteins associate with the nascent pre-rRNA and work in concert to generate RNA folding, modifications, rearrangements and cleavage as well as targeted degradation of pre-ribosomal RNA by the RNA exosome. In wing imaginal disks, might have a role in translation rate, growth and cell competition, probably through regulation of Xrp1 expression. Might have a role in development and longevity. This Drosophila melanogaster (Fruit fly) protein is Small ribosomal subunit protein eS12.